The primary structure comprises 449 residues: Heterogeneous nuclear ribonucleoprotein H2 (449 aa).

The residue at position 1 (Met1) is an N-acetylmethionine. Position 2 is an N-acetylmethionine; in Heterogeneous nuclear ribonucleoprotein H2, N-terminally processed (Met2). Positions 11–90 (FVVKVRGLPW…RYVEVFKSNS (80 aa)) constitute an RRM 1 domain. Ser23 carries the post-translational modification Phosphoserine. Lys35 is covalently cross-linked (Glycyl lysine isopeptide (Lys-Gly) (interchain with G-Cter in SUMO2)). Phosphoserine occurs at positions 54 and 63. Lys87 participates in a covalent cross-link: Glycyl lysine isopeptide (Lys-Gly) (interchain with G-Cter in SUMO2). Ser90 carries the phosphoserine modification. Residue Lys98 forms a Glycyl lysine isopeptide (Lys-Gly) (interchain with G-Cter in SUMO2) linkage. One can recognise an RRM 2 domain in the interval 111 to 188 (GFVRLRGLPF…RYIEIFKSSR (78 aa)). Position 233 is a dimethylated arginine; alternate (Arg233). Arg233 is modified (omega-N-methylarginine; alternate). A 1-1 repeat occupies 234-249 (GAYGGGYGGYDDYGGY). The tract at residues 234–433 (GAYGGGYGGY…YGGQSSMSGY (200 aa)) is 2 X 16 AA Gly-rich approximate repeats. Tyr246 carries the phosphotyrosine modification. The RRM 3 domain occupies 289 to 364 (HCVHMRGLPY…RYVELFLNST (76 aa)). Ser310 is subject to Phosphoserine. 3 tandem repeats follow at residues 354–372 (HRYVELFLNSTAGTSGGAY), 374–392 (HSYVELFLNSTAGASGGAY), and 418–433 (GGYGGGYGGQSSMSGY). Residues 354–392 (HRYVELFLNSTAGTSGGAYDHSYVELFLNSTAGASGGAY) form a 2 X 19 AA perfect repeats region.

In terms of assembly, component of a ribonucleoprotein complex containing mRNAs and RNA-binding proteins including DDX5, HNRNPH2 and SRSF1 as well as splicing regulator ARVCF. Interacts with TXNL4/DIM1.

Its subcellular location is the nucleus. It is found in the nucleoplasm. This protein is a component of the heterogeneous nuclear ribonucleoprotein (hnRNP) complexes which provide the substrate for the processing events that pre-mRNAs undergo before becoming functional, translatable mRNAs in the cytoplasm. Binds poly(RG). The polypeptide is Heterogeneous nuclear ribonucleoprotein H2 (HNRNPH2) (Bos taurus (Bovine)).